The chain runs to 409 residues: Serine/threonine transporter SstT (409 aa).

The next 9 membrane-spanning stretches (helical) occupy residues leucine 24–phenylalanine 44, phenylalanine 48–isoleucine 68, isoleucine 82–methionine 102, alanine 142–leucine 162, leucine 194–glycine 214, leucine 218–valine 238, isoleucine 292–methionine 312, glycine 319–cysteine 339, and valine 365–threonine 385.

The protein belongs to the dicarboxylate/amino acid:cation symporter (DAACS) (TC 2.A.23) family.

The protein resides in the cell inner membrane. The catalysed reaction is L-serine(in) + Na(+)(in) = L-serine(out) + Na(+)(out). The enzyme catalyses L-threonine(in) + Na(+)(in) = L-threonine(out) + Na(+)(out). In terms of biological role, involved in the import of serine and threonine into the cell, with the concomitant import of sodium (symport system). The sequence is that of Serine/threonine transporter SstT from Neisseria meningitidis serogroup C / serotype 2a (strain ATCC 700532 / DSM 15464 / FAM18).